A 504-amino-acid chain; its full sequence is Amphoterin-induced protein 3 (504 aa).

Residues 1–19 form the signal peptide; that stretch reads MTWLVLLGTLLCMLRVGLG. The Extracellular segment spans residues 20–383; it reads TPDSEGFPPR…PRPEPEAFNT (364 aa). In terms of domain architecture, LRRNT spans 25 to 61; the sequence is GFPPRALHNCPYKCICAADLLSCTGLGLQDVPAELPA. 2 disulfides stabilise this stretch: C34–C40 and C38–C47. LRR repeat units lie at residues 62-83, 86-107, 110-133, 134-155, 158-178, and 184-207; these read ATAD…WLAP, QLRA…VFVN, GLRL…DGLG, ALEK…AFHG, ALSH…DHLH, and HLLT…AALP. N-linked (GlcNAc...) asparagine glycosylation is present at N107. Residues 219 to 275 enclose the LRRCT domain; that stretch reads NPLPCDCRLYHLLQRWHQRGLSAVRDFAREYVCLAFKVPASRVRFFQHSRVFENCSS. Intrachain disulfides connect C223–C251, C225–C273, and C300–C352. 4 N-linked (GlcNAc...) asparagine glycosylation sites follow: N272, N301, N362, and N368. In terms of domain architecture, Ig-like C2-type spans 277 to 370; the sequence is PALGLERPEE…HNQTHEYNVS (94 aa). Residues 384–404 form a helical membrane-spanning segment; that stretch reads GFTTLLGCAVGLVLVLLYLFA. The Cytoplasmic segment spans residues 405–504; sequence PPCRCCRRAC…SIGSEGPMTT (100 aa). Residues 422-448 form a disordered region; sequence TPSPLQELSAQSSVLSTTPPDAPSRKA. Polar residues predominate over residues 424 to 440; the sequence is SPLQELSAQSSVLSTTP.

It belongs to the immunoglobulin superfamily. AMIGO family. Binds AMIGO1 or AMIGO2.

The protein resides in the membrane. In terms of biological role, may mediate heterophilic cell-cell interaction. May contribute to signal transduction through its intracellular domain. This chain is Amphoterin-induced protein 3, found in Homo sapiens (Human).